A 292-amino-acid polypeptide reads, in one-letter code: Protoheme IX farnesyltransferase (292 aa).

The next 9 membrane-spanning stretches (helical) occupy residues 13 to 33, 35 to 55, 84 to 104, 106 to 126, 135 to 155, 161 to 181, 206 to 226, 231 to 251, and 263 to 283; these read ILFG…QGSI, ILLL…GCVV, VALV…WFGV, GYAF…YSLW, TVIG…AVTH, ALLL…AIAI, IECV…YCFG, FFLI…IIGF, and FFLY…FTYQ.

It belongs to the UbiA prenyltransferase family. Protoheme IX farnesyltransferase subfamily.

It localises to the cell inner membrane. The catalysed reaction is heme b + (2E,6E)-farnesyl diphosphate + H2O = Fe(II)-heme o + diphosphate. It participates in porphyrin-containing compound metabolism; heme O biosynthesis; heme O from protoheme: step 1/1. Converts heme B (protoheme IX) to heme O by substitution of the vinyl group on carbon 2 of heme B porphyrin ring with a hydroxyethyl farnesyl side group. The protein is Protoheme IX farnesyltransferase of Acinetobacter baumannii (strain AB307-0294).